Here is a 356-residue protein sequence, read N- to C-terminus: Peptide chain release factor 1 (356 aa).

Residue Gln234 is modified to N5-methylglutamine.

The protein belongs to the prokaryotic/mitochondrial release factor family. Methylated by PrmC. Methylation increases the termination efficiency of RF1.

The protein localises to the cytoplasm. Its function is as follows. Peptide chain release factor 1 directs the termination of translation in response to the peptide chain termination codons UAG and UAA. The sequence is that of Peptide chain release factor 1 from Exiguobacterium sp. (strain ATCC BAA-1283 / AT1b).